A 50-amino-acid polypeptide reads, in one-letter code: Small integral membrane protein 46 (50 aa).

A helical transmembrane segment spans residues threonine 15–leucine 37.

It is found in the membrane. The polypeptide is Small integral membrane protein 46 (Homo sapiens (Human)).